The chain runs to 732 residues: uncharacterized protein (732 aa).

The tract at residues 145–207 is disordered; it reads ETLRDSVINP…RRRPEMASPH (63 aa). The segment covering 170 to 179 has biased composition (basic and acidic residues); sequence KGHETLERGS. A Reverse transcriptase domain is found at 176 to 524; sequence ERGSKALGPE…KKIPFLGYLI (349 aa).

It is found in the mitochondrion. This is an uncharacterized protein from Marchantia polymorpha (Common liverwort).